The following is a 160-amino-acid chain: SsrA-binding protein (160 aa).

The segment at 131–160 is disordered; it reads KKEYDKRHTERERDSDRELQRAVRTKGKDD.

Belongs to the SmpB family.

It is found in the cytoplasm. Required for rescue of stalled ribosomes mediated by trans-translation. Binds to transfer-messenger RNA (tmRNA), required for stable association of tmRNA with ribosomes. tmRNA and SmpB together mimic tRNA shape, replacing the anticodon stem-loop with SmpB. tmRNA is encoded by the ssrA gene; the 2 termini fold to resemble tRNA(Ala) and it encodes a 'tag peptide', a short internal open reading frame. During trans-translation Ala-aminoacylated tmRNA acts like a tRNA, entering the A-site of stalled ribosomes, displacing the stalled mRNA. The ribosome then switches to translate the ORF on the tmRNA; the nascent peptide is terminated with the 'tag peptide' encoded by the tmRNA and targeted for degradation. The ribosome is freed to recommence translation, which seems to be the essential function of trans-translation. This chain is SsrA-binding protein, found in Pseudomonas syringae pv. tomato (strain ATCC BAA-871 / DC3000).